Here is a 299-residue protein sequence, read N- to C-terminus: NAD kinase (299 aa).

Aspartate 75 serves as the catalytic Proton acceptor. NAD(+) is bound by residues 75–76, 149–150, arginine 177, aspartate 179, 190–195, alanine 214, and glutamine 248; these read DG, ND, and TAYALS.

It belongs to the NAD kinase family. A divalent metal cation serves as cofactor.

It localises to the cytoplasm. It carries out the reaction NAD(+) + ATP = ADP + NADP(+) + H(+). Functionally, involved in the regulation of the intracellular balance of NAD and NADP, and is a key enzyme in the biosynthesis of NADP. Catalyzes specifically the phosphorylation on 2'-hydroxyl of the adenosine moiety of NAD to yield NADP. This is NAD kinase from Burkholderia thailandensis (strain ATCC 700388 / DSM 13276 / CCUG 48851 / CIP 106301 / E264).